The following is a 405-amino-acid chain: Pulcherriminic acid synthase (405 aa).

Residues Lys-62, Asn-229, Arg-285, and Cys-353 each contribute to the heme site.

The protein belongs to the cytochrome P450 family. In terms of assembly, homodimer. Heme is required as a cofactor.

The catalysed reaction is cyclo(L-leucyl-L-leucyl) + 6 reduced [2Fe-2S]-[ferredoxin] + 3 O2 + 4 H(+) = pulcherriminic acid + 6 oxidized [2Fe-2S]-[ferredoxin] + 4 H2O. Involved in the biosynthesis of pulcherrimin, a red extracellular pigment. Catalyzes the oxidation of cyclo(L-Leu-L-Leu) (cLL) to yield pulcherriminic acid which forms pulcherrimin via a nonenzymic reaction with Fe(3+). Substrates with small alkyl groups (cAA, cLG, cLP) exhibit weaker binding to CYP134A1, but substrates with larger hydrophobic side chains bind in a similar regime to cLL. The sequence is that of Pulcherriminic acid synthase (cypX) from Bacillus subtilis (strain 168).